Consider the following 395-residue polypeptide: Formate-dependent phosphoribosylglycinamide formyltransferase (395 aa).

N(1)-(5-phospho-beta-D-ribosyl)glycinamide contacts are provided by residues 22-23 (EL) and E82. ATP-binding positions include R115, K156, 161-166 (SSGKGQ), 196-199 (EGFI), and E204. Positions 120-309 (RLAAETLGLP…EFALHARAIL (190 aa)) constitute an ATP-grasp domain. Mg(2+) contacts are provided by E268 and E280. N(1)-(5-phospho-beta-D-ribosyl)glycinamide is bound by residues D287, K356, and 363-364 (RR).

Belongs to the PurK/PurT family. As to quaternary structure, homodimer.

It carries out the reaction N(1)-(5-phospho-beta-D-ribosyl)glycinamide + formate + ATP = N(2)-formyl-N(1)-(5-phospho-beta-D-ribosyl)glycinamide + ADP + phosphate + H(+). The protein operates within purine metabolism; IMP biosynthesis via de novo pathway; N(2)-formyl-N(1)-(5-phospho-D-ribosyl)glycinamide from N(1)-(5-phospho-D-ribosyl)glycinamide (formate route): step 1/1. Its function is as follows. Involved in the de novo purine biosynthesis. Catalyzes the transfer of formate to 5-phospho-ribosyl-glycinamide (GAR), producing 5-phospho-ribosyl-N-formylglycinamide (FGAR). Formate is provided by PurU via hydrolysis of 10-formyl-tetrahydrofolate. The chain is Formate-dependent phosphoribosylglycinamide formyltransferase from Stenotrophomonas maltophilia (strain R551-3).